A 319-amino-acid polypeptide reads, in one-letter code: Pantothenate kinase (319 aa).

101–108 (GSVAVGKS) is an ATP binding site.

This sequence belongs to the prokaryotic pantothenate kinase family.

Its subcellular location is the cytoplasm. It carries out the reaction (R)-pantothenate + ATP = (R)-4'-phosphopantothenate + ADP + H(+). It participates in cofactor biosynthesis; coenzyme A biosynthesis; CoA from (R)-pantothenate: step 1/5. The polypeptide is Pantothenate kinase (Clavibacter sepedonicus (Clavibacter michiganensis subsp. sepedonicus)).